A 105-amino-acid polypeptide reads, in one-letter code: Molt-inhibiting hormone (105 aa).

The N-terminal stretch at 1 to 28 (MYRLAMRTWLAIVIVVVGTSLLFDTASA) is a signal peptide. Intrachain disulfides connect Cys35–Cys72, Cys52–Cys68, and Cys55–Cys81.

It belongs to the arthropod CHH/MIH/GIH/VIH hormone family. Produced by the medulla terminalis X-organ in the eyestalks and transported to the sinus gland where it is stored and released.

It is found in the secreted. Inhibits Y-organs where molting hormone (ecdysteroid) is secreted. A molting cycle is initiated when MIH secretion diminishes or stops. Has little or no hyperglycemic activity. The chain is Molt-inhibiting hormone from Penaeus japonicus (Kuruma prawn).